Reading from the N-terminus, the 326-residue chain is UDP-3-O-acylglucosamine N-acyltransferase (326 aa).

Residue H235 is the Proton acceptor of the active site.

The protein belongs to the transferase hexapeptide repeat family. LpxD subfamily. As to quaternary structure, homotrimer.

It catalyses the reaction a UDP-3-O-[(3R)-3-hydroxyacyl]-alpha-D-glucosamine + a (3R)-hydroxyacyl-[ACP] = a UDP-2-N,3-O-bis[(3R)-3-hydroxyacyl]-alpha-D-glucosamine + holo-[ACP] + H(+). The protein operates within bacterial outer membrane biogenesis; LPS lipid A biosynthesis. Functionally, catalyzes the N-acylation of UDP-3-O-acylglucosamine using 3-hydroxyacyl-ACP as the acyl donor. Is involved in the biosynthesis of lipid A, a phosphorylated glycolipid that anchors the lipopolysaccharide to the outer membrane of the cell. The protein is UDP-3-O-acylglucosamine N-acyltransferase of Helicobacter hepaticus (strain ATCC 51449 / 3B1).